Reading from the N-terminus, the 474-residue chain is 3-isopropylmalate dehydratase large subunit (474 aa).

The [4Fe-4S] cluster site is built by Cys353, Cys414, and Cys417.

This sequence belongs to the aconitase/IPM isomerase family. LeuC type 1 subfamily. Heterodimer of LeuC and LeuD. It depends on [4Fe-4S] cluster as a cofactor.

It carries out the reaction (2R,3S)-3-isopropylmalate = (2S)-2-isopropylmalate. The protein operates within amino-acid biosynthesis; L-leucine biosynthesis; L-leucine from 3-methyl-2-oxobutanoate: step 2/4. Catalyzes the isomerization between 2-isopropylmalate and 3-isopropylmalate, via the formation of 2-isopropylmaleate. This Xylella fastidiosa (strain M12) protein is 3-isopropylmalate dehydratase large subunit.